Reading from the N-terminus, the 98-residue chain is Protein translation factor SUI1 homolog (98 aa).

This sequence belongs to the SUI1 family.

The sequence is that of Protein translation factor SUI1 homolog from Thermococcus onnurineus (strain NA1).